The sequence spans 106 residues: Iron-sulfur cluster assembly protein CyaY (106 aa).

This sequence belongs to the frataxin family.

Functionally, involved in iron-sulfur (Fe-S) cluster assembly. May act as a regulator of Fe-S biogenesis. This is Iron-sulfur cluster assembly protein CyaY from Salmonella newport (strain SL254).